We begin with the raw amino-acid sequence, 96 residues long: Large ribosomal subunit protein bL27 (96 aa).

Positions 1 to 10 (MLLKLNIQLF) are excised as a propeptide.

The protein belongs to the bacterial ribosomal protein bL27 family. In terms of processing, the N-terminus is cleaved by ribosomal processing cysteine protease Prp.

This Phytoplasma mali (strain AT) protein is Large ribosomal subunit protein bL27.